Consider the following 580-residue polypeptide: Laccase-20 (580 aa).

A signal peptide spans 1–23; sequence MVASLLCTVAVAVLAVAAVGGEA. Plastocyanin-like domains lie at 31–147 and 156–310; these read VVHE…PRDG and KDVP…YTSA. N-linked (GlcNAc...) asparagine glycans are attached at residues Asn-36 and Asn-42. Positions 81 and 83 each coordinate Cu cation. Asn-115 carries N-linked (GlcNAc...) asparagine glycosylation. Cu cation contacts are provided by His-126 and His-128. Residues Asn-200, Asn-339, Asn-392, Asn-429, and Asn-460 are each glycosylated (N-linked (GlcNAc...) asparagine). The region spanning 419–561 is the Plastocyanin-like 3 domain; it reads DFPVRPPRPY…ATAFIVEDGP (143 aa). Positions 478, 481, 483, 540, 541, 542, 546, and 551 each coordinate Cu cation. The tract at residues 560-580 is disordered; that stretch reads GPTPETSLPPPPPEFKRCDAS.

Belongs to the multicopper oxidase family. It depends on Cu cation as a cofactor.

It localises to the secreted. It is found in the extracellular space. Its subcellular location is the apoplast. The enzyme catalyses 4 hydroquinone + O2 = 4 benzosemiquinone + 2 H2O. Functionally, lignin degradation and detoxification of lignin-derived products. In Oryza sativa subsp. indica (Rice), this protein is Laccase-20 (LAC20).